We begin with the raw amino-acid sequence, 123 residues long: Large ribosomal subunit protein bL12 (123 aa).

It belongs to the bacterial ribosomal protein bL12 family. In terms of assembly, homodimer. Part of the ribosomal stalk of the 50S ribosomal subunit. Forms a multimeric L10(L12)X complex, where L10 forms an elongated spine to which 2 to 4 L12 dimers bind in a sequential fashion. Binds GTP-bound translation factors.

Its function is as follows. Forms part of the ribosomal stalk which helps the ribosome interact with GTP-bound translation factors. Is thus essential for accurate translation. The sequence is that of Large ribosomal subunit protein bL12 from Ectopseudomonas mendocina (strain ymp) (Pseudomonas mendocina).